The chain runs to 602 residues: Adenylosuccinate synthetase (602 aa).

GTP-binding positions include Gly74 to Lys80 and Gly104 to Thr106. The Proton acceptor role is filled by Asp75. 2 residues coordinate Mg(2+): Asp75 and Gly104. IMP is bound by residues Asp75–Lys78, Asn102–His105, Thr189, Lys203, Gln315, Thr331, and Lys459. The active-site Proton donor is His105. Residue Ala455–Arg461 coordinates substrate. GTP-binding positions include Arg461 and Gly589–Gly591.

Belongs to the adenylosuccinate synthetase family. In terms of assembly, homodimer. The cofactor is Mg(2+).

Its subcellular location is the cytoplasm. The catalysed reaction is IMP + L-aspartate + GTP = N(6)-(1,2-dicarboxyethyl)-AMP + GDP + phosphate + 2 H(+). It functions in the pathway purine metabolism; AMP biosynthesis via de novo pathway; AMP from IMP: step 1/2. Its function is as follows. Plays an important role in the salvage pathway for purine nucleotide biosynthesis. Catalyzes the first committed step in the biosynthesis of AMP from IMP. The chain is Adenylosuccinate synthetase from Trypanosoma brucei brucei (strain 927/4 GUTat10.1).